Reading from the N-terminus, the 235-residue chain is Elongation factor Tu, chloroplastic (235 aa).

The 125-residue stretch at 1–125 folds into the tr-type G domain; sequence KNMITGAAQM…KVDSYIPTPQ (125 aa). A GTP-binding site is contributed by 47–50; that stretch reads NKED.

It belongs to the TRAFAC class translation factor GTPase superfamily. Classic translation factor GTPase family. EF-Tu/EF-1A subfamily.

The protein localises to the plastid. It is found in the chloroplast. It carries out the reaction GTP + H2O = GDP + phosphate + H(+). Its function is as follows. GTP hydrolase that promotes the GTP-dependent binding of aminoacyl-tRNA to the A-site of ribosomes during protein biosynthesis. This is Elongation factor Tu, chloroplastic (tufA) from Gonium pectorale (Green alga).